We begin with the raw amino-acid sequence, 141 residues long: 3-hydroxyacyl-[acyl-carrier-protein] dehydratase FabZ (141 aa).

The active site involves H48.

It belongs to the thioester dehydratase family. FabZ subfamily.

The protein resides in the cytoplasm. The enzyme catalyses a (3R)-hydroxyacyl-[ACP] = a (2E)-enoyl-[ACP] + H2O. In terms of biological role, involved in unsaturated fatty acids biosynthesis. Catalyzes the dehydration of short chain beta-hydroxyacyl-ACPs and long chain saturated and unsaturated beta-hydroxyacyl-ACPs. This Bacillus velezensis (strain DSM 23117 / BGSC 10A6 / LMG 26770 / FZB42) (Bacillus amyloliquefaciens subsp. plantarum) protein is 3-hydroxyacyl-[acyl-carrier-protein] dehydratase FabZ.